The chain runs to 141 residues: Albumin-8 (141 aa).

A signal peptide spans 1-25 (MARFSIVFAAAGVLLLVAMAPVSEA). Positions 26–38 (STTTIITTIIEEN) are excised as a propeptide. Disulfide bonds link C49–C100, C62–C89, C90–C132, and C102–C139.

It belongs to the 2S seed storage albumins family. Heterodimer; disulfide-linked.

Functionally, this is a 2S seed storage protein. The chain is Albumin-8 from Helianthus annuus (Common sunflower).